The following is a 206-amino-acid chain: Probable NAD(+) phosphorylase Rv3189 (206 aa).

Belongs to the MbcT/ParT/Res family. As to quaternary structure, forms a heterotetramer with cognate antitoxin Rv3188.

The catalysed reaction is phosphate + NAD(+) = ADP-alpha-D-ribose 1''-phosphate + nicotinamide + H(+). Functionally, probable toxic component of a type II toxin-antitoxin (TA) system. Degrades NAD(+) by phosphorolysis. Neutralized by its cognate antitoxin Rv3188. This chain is Probable NAD(+) phosphorylase Rv3189, found in Mycobacterium tuberculosis (strain ATCC 25618 / H37Rv).